The following is a 347-amino-acid chain: uncharacterized protein (347 aa).

A signal peptide spans 1–21 (MNKKSLNIVVMFGILMILAFS).

It belongs to the bacterial solute-binding protein 1 family. WtpA subfamily.

This is an uncharacterized protein from Methanococcus maripaludis (strain C5 / ATCC BAA-1333).